Reading from the N-terminus, the 323-residue chain is Thymidylate synthase (323 aa).

Residues Arg21 and 172–173 (RR) each bind dUMP. Cys192 functions as the Nucleophile in the catalytic mechanism. Residues 214-217 (RSND), Asn225, and 255-257 (HVY) contribute to the dUMP site. Position 217 (Asp217) interacts with (6R)-5,10-methylene-5,6,7,8-tetrahydrofolate. Ala322 is a (6R)-5,10-methylene-5,6,7,8-tetrahydrofolate binding site.

The protein belongs to the thymidylate synthase family. Bacterial-type ThyA subfamily. Homodimer.

Its subcellular location is the cytoplasm. It catalyses the reaction dUMP + (6R)-5,10-methylene-5,6,7,8-tetrahydrofolate = 7,8-dihydrofolate + dTMP. It functions in the pathway pyrimidine metabolism; dTTP biosynthesis. Its function is as follows. Catalyzes the reductive methylation of 2'-deoxyuridine-5'-monophosphate (dUMP) to 2'-deoxythymidine-5'-monophosphate (dTMP) while utilizing 5,10-methylenetetrahydrofolate (mTHF) as the methyl donor and reductant in the reaction, yielding dihydrofolate (DHF) as a by-product. This enzymatic reaction provides an intracellular de novo source of dTMP, an essential precursor for DNA biosynthesis. This Bordetella parapertussis (strain 12822 / ATCC BAA-587 / NCTC 13253) protein is Thymidylate synthase.